The sequence spans 157 residues: E3 ubiquitin-protein ligase RHA1B (157 aa).

The RING-type; atypical zinc finger occupies C85–R129.

The enzyme catalyses S-ubiquitinyl-[E2 ubiquitin-conjugating enzyme]-L-cysteine + [acceptor protein]-L-lysine = [E2 ubiquitin-conjugating enzyme]-L-cysteine + N(6)-ubiquitinyl-[acceptor protein]-L-lysine.. It functions in the pathway protein modification; protein ubiquitination. Possesses E3 ubiquitin-protein ligase activity when associated with the E2 enzyme UBC8 in vitro. The polypeptide is E3 ubiquitin-protein ligase RHA1B (Arabidopsis thaliana (Mouse-ear cress)).